Reading from the N-terminus, the 226-residue chain is Thiopurine S-methyltransferase (226 aa).

The S-adenosyl-L-methionine site is built by Trp-10, Leu-47, Glu-68, and Arg-130.

The protein belongs to the class I-like SAM-binding methyltransferase superfamily. TPMT family.

It is found in the cytoplasm. It carries out the reaction S-adenosyl-L-methionine + a thiopurine = S-adenosyl-L-homocysteine + a thiopurine S-methylether.. The polypeptide is Thiopurine S-methyltransferase (Shewanella sediminis (strain HAW-EB3)).